The primary structure comprises 95 residues: Co-chaperonin GroES (95 aa).

Belongs to the GroES chaperonin family. As to quaternary structure, heptamer of 7 subunits arranged in a ring. Interacts with the chaperonin GroEL.

It localises to the cytoplasm. Its function is as follows. Together with the chaperonin GroEL, plays an essential role in assisting protein folding. The GroEL-GroES system forms a nano-cage that allows encapsulation of the non-native substrate proteins and provides a physical environment optimized to promote and accelerate protein folding. GroES binds to the apical surface of the GroEL ring, thereby capping the opening of the GroEL channel. The polypeptide is Co-chaperonin GroES (Neisseria meningitidis serogroup C (strain 053442)).